We begin with the raw amino-acid sequence, 600 residues long: Transcription factor efl-3 (600 aa).

The disordered stretch occupies residues 35–65 (LPEPRVNRTTDPDHENLLPSPVPRPSPAMSQ). Basic and acidic residues predominate over residues 39–50 (RVNRTTDPDHEN). 2 consecutive DNA-binding regions follow at residues 95–164 (RKEK…QWQG) and 253–343 (RDRQ…VYCG).

It belongs to the E2F/DP family.

The protein resides in the nucleus. Its function is as follows. Probable transcription factor which represses gene expression in a subset of ventral nerve cord neurons. Involved in regulating programmed cell death and determining cell fate during development, acting in a partially redundant manner with lin-39 to repress the BH3 domain-encoding gene egl-1 in the VA and VB motor neurons. The sequence is that of Transcription factor efl-3 from Caenorhabditis elegans.